The following is a 474-amino-acid chain: Protein CyaE (474 aa).

The first 31 residues, 1-31 (MAAVQVRRRGRALALALWAGFALSVGGGVRA), serve as a signal peptide directing secretion.

This sequence belongs to the outer membrane factor (OMF) (TC 1.B.17) family.

It is found in the cell outer membrane. Its function is as follows. CyaE is necessary for transport of calmodulin-sensitive adenylate cyclase-hemolysin (cyclolysin). The sequence is that of Protein CyaE (cyaE) from Bordetella pertussis (strain Tohama I / ATCC BAA-589 / NCTC 13251).